The sequence spans 438 residues: tRNA modification GTPase MnmE (438 aa).

(6S)-5-formyl-5,6,7,8-tetrahydrofolate is bound by residues R20, E76, and K115. The 161-residue stretch at 210–370 (NFTIMILGRR…LKCFINKIVD (161 aa)) folds into the TrmE-type G domain. Position 220 (N220) interacts with K(+). GTP-binding positions include 220–225 (NVGKST), 239–245 (TNIPGTT), and 264–267 (DTAG). Mg(2+) is bound at residue S224. K(+) is bound by residues T239, I241, and T244. Residue T245 participates in Mg(2+) binding. A (6S)-5-formyl-5,6,7,8-tetrahydrofolate-binding site is contributed by K438.

Belongs to the TRAFAC class TrmE-Era-EngA-EngB-Septin-like GTPase superfamily. TrmE GTPase family. Homodimer. Heterotetramer of two MnmE and two MnmG subunits. It depends on K(+) as a cofactor.

Its subcellular location is the cytoplasm. Exhibits a very high intrinsic GTPase hydrolysis rate. Involved in the addition of a carboxymethylaminomethyl (cmnm) group at the wobble position (U34) of certain tRNAs, forming tRNA-cmnm(5)s(2)U34. The chain is tRNA modification GTPase MnmE from Carsonella ruddii (strain PV).